A 173-amino-acid chain; its full sequence is Crossover junction endodeoxyribonuclease RuvC (173 aa).

Catalysis depends on residues D8, E67, and D139. Mg(2+)-binding residues include D8, E67, and D139.

It belongs to the RuvC family. In terms of assembly, homodimer which binds Holliday junction (HJ) DNA. The HJ becomes 2-fold symmetrical on binding to RuvC with unstacked arms; it has a different conformation from HJ DNA in complex with RuvA. In the full resolvosome a probable DNA-RuvA(4)-RuvB(12)-RuvC(2) complex forms which resolves the HJ. The cofactor is Mg(2+).

It localises to the cytoplasm. It catalyses the reaction Endonucleolytic cleavage at a junction such as a reciprocal single-stranded crossover between two homologous DNA duplexes (Holliday junction).. Its function is as follows. The RuvA-RuvB-RuvC complex processes Holliday junction (HJ) DNA during genetic recombination and DNA repair. Endonuclease that resolves HJ intermediates. Cleaves cruciform DNA by making single-stranded nicks across the HJ at symmetrical positions within the homologous arms, yielding a 5'-phosphate and a 3'-hydroxyl group; requires a central core of homology in the junction. The consensus cleavage sequence is 5'-(A/T)TT(C/G)-3'. Cleavage occurs on the 3'-side of the TT dinucleotide at the point of strand exchange. HJ branch migration catalyzed by RuvA-RuvB allows RuvC to scan DNA until it finds its consensus sequence, where it cleaves and resolves the cruciform DNA. The protein is Crossover junction endodeoxyribonuclease RuvC of Shewanella oneidensis (strain ATCC 700550 / JCM 31522 / CIP 106686 / LMG 19005 / NCIMB 14063 / MR-1).